The following is a 745-amino-acid chain: 5-methyltetrahydropteroyltriglutamate--homocysteine methyltransferase (745 aa).

5-methyltetrahydropteroyltri-L-glutamate contacts are provided by K19 and N115. Residues 420 to 422 (IGS) and E473 each bind L-homocysteine. L-methionine-binding positions include 420–422 (IGS) and E473. 5-methyltetrahydropteroyltri-L-glutamate is bound by residues D478, Y501, 504 to 505 (RA), and W550. D588 contacts L-homocysteine. An L-methionine-binding site is contributed by D588. Residues H630, C632, and E654 each contribute to the Zn(2+) site. H683 (proton donor) is an active-site residue. C715 provides a ligand contact to Zn(2+).

Belongs to the vitamin-B12 independent methionine synthase family. The cofactor is Zn(2+).

The catalysed reaction is 5-methyltetrahydropteroyltri-L-glutamate + L-homocysteine = tetrahydropteroyltri-L-glutamate + L-methionine. The protein operates within amino-acid biosynthesis; L-methionine biosynthesis via de novo pathway; L-methionine from L-homocysteine (MetE route): step 1/1. In terms of biological role, catalyzes the transfer of a methyl group from 5-methyltetrahydrofolate to homocysteine resulting in methionine formation. This is 5-methyltetrahydropteroyltriglutamate--homocysteine methyltransferase from Streptococcus mutans serotype c (strain ATCC 700610 / UA159).